A 115-amino-acid polypeptide reads, in one-letter code: Replication initiation control protein YabA (115 aa).

Positions 86, 88, 102, and 105 each coordinate Zn(2+).

This sequence belongs to the YabA family. As to quaternary structure, homotetramer. Interacts with both DnaA and DnaN, acting as a bridge between these two proteins. The cofactor is Zn(2+).

Its subcellular location is the cytoplasm. The protein resides in the nucleoid. In terms of biological role, involved in control of chromosome replication initiation. Inhibits the cooperative binding of DnaA to the oriC region, thus negatively regulating initiation of chromosome replication. Inhibits the ability of DnaA-ATP to form a helix on DNA; does not disassemble preformed DnaA-DNA helices. Decreases the residence time of DnaA on the chromosome at its binding sites (oriC, replication forks and promoter-binding sites). Tethers DnaA to the replication machinery via the DNA polymerase beta sliding clamp subunit (dnaN). Associates with oriC and other DnaA targets on the chromosome in a DnaA-dependent manner. The protein is Replication initiation control protein YabA of Enterococcus faecalis (strain ATCC 700802 / V583).